Consider the following 292-residue polypeptide: NAD kinase (292 aa).

The Proton acceptor role is filled by Asp-72. NAD(+) contacts are provided by residues 72–73, 146–147, His-157, Arg-174, Asp-176, and 187–192; these read DG, NE, and TAYALS.

Belongs to the NAD kinase family. A divalent metal cation is required as a cofactor.

Its subcellular location is the cytoplasm. It carries out the reaction NAD(+) + ATP = ADP + NADP(+) + H(+). Functionally, involved in the regulation of the intracellular balance of NAD and NADP, and is a key enzyme in the biosynthesis of NADP. Catalyzes specifically the phosphorylation on 2'-hydroxyl of the adenosine moiety of NAD to yield NADP. This is NAD kinase from Shewanella oneidensis (strain ATCC 700550 / JCM 31522 / CIP 106686 / LMG 19005 / NCIMB 14063 / MR-1).